The primary structure comprises 229 residues: 2-C-methyl-D-erythritol 4-phosphate cytidylyltransferase (229 aa).

Belongs to the IspD/TarI cytidylyltransferase family. IspD subfamily.

The enzyme catalyses 2-C-methyl-D-erythritol 4-phosphate + CTP + H(+) = 4-CDP-2-C-methyl-D-erythritol + diphosphate. Its pathway is isoprenoid biosynthesis; isopentenyl diphosphate biosynthesis via DXP pathway; isopentenyl diphosphate from 1-deoxy-D-xylulose 5-phosphate: step 2/6. Catalyzes the formation of 4-diphosphocytidyl-2-C-methyl-D-erythritol from CTP and 2-C-methyl-D-erythritol 4-phosphate (MEP). The sequence is that of 2-C-methyl-D-erythritol 4-phosphate cytidylyltransferase from Neisseria meningitidis serogroup C (strain 053442).